The chain runs to 232 residues: 7-cyano-7-deazaguanine synthase (232 aa).

8–18 (FSGGQDSTTCL) contributes to the ATP binding site. Zn(2+)-binding residues include Cys-187, Cys-196, Cys-199, and Cys-202.

This sequence belongs to the QueC family. Zn(2+) serves as cofactor.

The enzyme catalyses 7-carboxy-7-deazaguanine + NH4(+) + ATP = 7-cyano-7-deazaguanine + ADP + phosphate + H2O + H(+). The protein operates within purine metabolism; 7-cyano-7-deazaguanine biosynthesis. Functionally, catalyzes the ATP-dependent conversion of 7-carboxy-7-deazaguanine (CDG) to 7-cyano-7-deazaguanine (preQ(0)). This is 7-cyano-7-deazaguanine synthase from Vibrio parahaemolyticus serotype O3:K6 (strain RIMD 2210633).